The following is a 291-amino-acid chain: MKNAILIDGNSLAYRAYFATWQQVEFAKLHNLPFNNAIRTMLMMCWNLLQSKQYDYGVISFDTKAPTFRDQLYSEYKSKRSKTPSELLVQIPVVKESLRHLGFLVCEQDGFEADDLIGSYARLMTQNNVAVDIYSSDRDLLQLVDSMTSVWLCVKGTKEMKEYNTDNFAEQFFGLTPKQVIEYKGLVGDNSDNLTGIKGIGPKKGIDLLKQYGTIDNIFANFDKLSKALQTILQGQIDTAKKFSFLASIKTDIKLNDDIVHAALKPIDKQALLELLDKYGIKALAQKFSQL.

The 5'-3' exonuclease domain occupies 176-269 (TPKQVIEYKG…VHAALKPIDK (94 aa)).

5'-3' exonuclease acting preferentially on double-stranded DNA. In Mycoplasma pneumoniae (strain ATCC 29342 / M129 / Subtype 1) (Mycoplasmoides pneumoniae), this protein is 5'-3' exonuclease (polA).